The sequence spans 203 residues: Glycerol-3-phosphate acyltransferase (203 aa).

A run of 4 helical transmembrane segments spans residues 1–21, 84–104, 117–137, and 157–179; these read MIQT…LGAI, WLQV…VWLG, IFLG…MAVI, and LMLL…LMVL.

The protein belongs to the PlsY family. In terms of assembly, probably interacts with PlsX.

The protein resides in the cell inner membrane. The enzyme catalyses an acyl phosphate + sn-glycerol 3-phosphate = a 1-acyl-sn-glycero-3-phosphate + phosphate. It participates in lipid metabolism; phospholipid metabolism. Catalyzes the transfer of an acyl group from acyl-phosphate (acyl-PO(4)) to glycerol-3-phosphate (G3P) to form lysophosphatidic acid (LPA). This enzyme utilizes acyl-phosphate as fatty acyl donor, but not acyl-CoA or acyl-ACP. In Synechococcus sp. (strain CC9605), this protein is Glycerol-3-phosphate acyltransferase.